Consider the following 202-residue polypeptide: LexA repressor (202 aa).

Positions 28–48 (QQEIARAFGFRSLGTVRNYLV) form a DNA-binding region, H-T-H motif. Residues Ser120 and Lys157 each act as for autocatalytic cleavage activity in the active site.

The protein belongs to the peptidase S24 family. As to quaternary structure, homodimer.

It catalyses the reaction Hydrolysis of Ala-|-Gly bond in repressor LexA.. In terms of biological role, represses a number of genes involved in the response to DNA damage (SOS response), including recA and lexA. In the presence of single-stranded DNA, RecA interacts with LexA causing an autocatalytic cleavage which disrupts the DNA-binding part of LexA, leading to derepression of the SOS regulon and eventually DNA repair. This chain is LexA repressor, found in Syntrophotalea carbinolica (strain DSM 2380 / NBRC 103641 / GraBd1) (Pelobacter carbinolicus).